We begin with the raw amino-acid sequence, 380 residues long: Probable protein phosphatase 2C 27 (380 aa).

Positions 84–344 (RSGSCAEQGA…DNLTVIVVCF (261 aa)) constitute a PPM-type phosphatase domain. Positions 128, 129, 292, and 335 each coordinate Mn(2+).

This sequence belongs to the PP2C family. Mg(2+) is required as a cofactor. Requires Mn(2+) as cofactor. Expressed in roots, leaves, stems, flower, and trichomes.

It localises to the nucleus. Its subcellular location is the cytoplasm. It carries out the reaction O-phospho-L-seryl-[protein] + H2O = L-seryl-[protein] + phosphate. The catalysed reaction is O-phospho-L-threonyl-[protein] + H2O = L-threonyl-[protein] + phosphate. Its function is as follows. Confers salt tolerance by triggering the expression of stress-responsive genes. The sequence is that of Probable protein phosphatase 2C 27 from Arabidopsis thaliana (Mouse-ear cress).